A 340-amino-acid polypeptide reads, in one-letter code: tRNA-cytidine(32) 2-sulfurtransferase (340 aa).

The PP-loop motif motif lies at 74–79 (SGGKDS). [4Fe-4S] cluster is bound by residues cysteine 149, cysteine 152, and cysteine 240.

The protein belongs to the TtcA family. In terms of assembly, homodimer. The cofactor is Mg(2+). [4Fe-4S] cluster serves as cofactor.

The protein localises to the cytoplasm. It carries out the reaction cytidine(32) in tRNA + S-sulfanyl-L-cysteinyl-[cysteine desulfurase] + AH2 + ATP = 2-thiocytidine(32) in tRNA + L-cysteinyl-[cysteine desulfurase] + A + AMP + diphosphate + H(+). Its pathway is tRNA modification. Catalyzes the ATP-dependent 2-thiolation of cytidine in position 32 of tRNA, to form 2-thiocytidine (s(2)C32). The sulfur atoms are provided by the cysteine/cysteine desulfurase (IscS) system. This is tRNA-cytidine(32) 2-sulfurtransferase from Burkholderia ambifaria (strain MC40-6).